The primary structure comprises 1203 residues: Plasma membrane calcium-transporting ATPase 4 (1203 aa).

Over 1 to 92 (MTNPSGHNLP…NMIPPKKPKT (92 aa)) the chain is Cytoplasmic. Ser-13 is modified (phosphoserine). The helical transmembrane segment at 93–113 (FLELVWEALQDVTLIILEIAA) threads the bilayer. The Extracellular portion of the chain corresponds to 114–150 (IISLVLSFYRPPGGENEICGHIVSNPEEDEEGETGWI). Residues 151–171 (EGAAILASVIIVVFVTAFNDW) form a helical membrane-spanning segment. Residues 172 to 356 (SKEKQFRGLQ…KEKSVLQGKL (185 aa)) are Cytoplasmic-facing. Residues 294-319 (DDEKKKKGKKQGVSENRNKAKTQDGV) are disordered. Ser-328 and Ser-334 each carry phosphoserine. Residues 330–349 (EGLDSEEKEKKASKGPKKEK) form a disordered region. The span at 334-349 (SEEKEKKASKGPKKEK) shows a compositional bias: basic and acidic residues. The helical transmembrane segment at 357–376 (TRLAVQIGKAGLIMSILTVL) threads the bilayer. At 377-409 (ILILYFVVDNFVIQRRAWLPECTPVYIQYFVKF) the chain is on the extracellular side. Residues 410–427 (FIIGVTVLVVAVPEGLPL) form a helical membrane-spanning segment. At 428-840 (AVTISLAYSV…MWGRNVYDSI (413 aa)) the chain is on the cytoplasmic side. The 4-aspartylphosphate intermediate role is filled by Asp-465. Positions 785 and 789 each coordinate Mg(2+). The chain crosses the membrane as a helical span at residues 841–860 (SKFLQFQLTVNVVAVIVAFS). Residues 861–870 (GACITQDSPL) lie on the Extracellular side of the membrane. Residues 871-891 (KAVQMLWVNLIMDTFASLALA) form a helical membrane-spanning segment. Residues 892 to 911 (TEPPTDSLLRRRPYGRNKPL) are Cytoplasmic-facing. A helical membrane pass occupies residues 912–934 (ISRTMMKNILGHAVYQLGIVFLL). Residues 935–952 (VFAGDKLFDIDSGRKAPL) are Extracellular-facing. A helical membrane pass occupies residues 953 to 974 (NSPPSQHYTIVFNTFVLMQLFN). The Cytoplasmic portion of the chain corresponds to 975 to 993 (EINSRKIHGEKNVFAGVYR). Residues 994 to 1015 (NIIFCSVVLGTFFCQILIVEVG) form a helical membrane-spanning segment. Residues 1016–1025 (GKPFSCTNLT) lie on the Extracellular side of the membrane. Residues 1026–1047 (MEQWMWCLFIGIGELLWGQVIS) traverse the membrane as a helical segment. The Cytoplasmic segment spans residues 1048 to 1203 (AIPTKSLKFL…SPLQSQETPV (156 aa)). Ser-1064 and Ser-1070 each carry phosphoserine. The calmodulin-binding subdomain A stretch occupies residues 1086–1103 (LRRGQILWVRGLNRIQTQ). Thr-1102 is modified (phosphothreonine; by PKC). Phosphoserine is present on Gln-1103. The segment at 1104-1113 (IRVVKVFHSF) is calmodulin-binding subdomain B. A phosphoserine mark is found at Arg-1114, Asp-1115, Ile-1126, and Ser-1144.

Belongs to the cation transport ATPase (P-type) (TC 3.A.3) family. Type IIB subfamily. As to quaternary structure, interacts with PDZD11. Interacts with SLC35G1 and STIM1. Interacts with calmodulin. Ubiquitously expressed. Not detected in liver. The highest levels are found in uterus and stomach. Isoform XA is found in uterus, brain, stomach, small intestine, colon and pancreas. Isoform XB is found in uterus, skeletal muscle, lung, kidney, spleen, stomach, small intestine and pancreas. Isoform ZA is found in testis and isoform ZB is found in testis and heart.

Its subcellular location is the cell membrane. The protein localises to the cell projection. It is found in the cilium. It localises to the flagellum membrane. The catalysed reaction is Ca(2+)(in) + ATP + H2O = Ca(2+)(out) + ADP + phosphate + H(+). Its activity is regulated as follows. Activated by calcium/calmodulin. Its function is as follows. Calcium/calmodulin-regulated and magnesium-dependent enzyme that catalyzes the hydrolysis of ATP coupled with the transport of calcium out of the cell. By regulating sperm cell calcium homeostasis, may play a role in sperm motility. This Rattus norvegicus (Rat) protein is Plasma membrane calcium-transporting ATPase 4.